The sequence spans 627 residues: Ski protein homolog (627 aa).

Residues 1–12 (MSDSPIGSSQQV) show a composition bias toward polar residues. Disordered stretches follow at residues 1–22 (MSDS…PDLM), 34–58 (LHEE…KDSR), and 299–318 (EYDE…METP).

This sequence belongs to the SKI family. As to quaternary structure, may interact with daf-3. As to expression, expressed in ganglia in the head and tail and in the anterior pharynx.

The protein resides in the nucleus. In terms of biological role, probable component of transcriptional regulatory complex with SMAD protein daf-3. Required to regulate entry into a developmentally arrested larval state known as dauer, in response to harsh environmental conditions. Involved in larvae undergoing cell-cycle arrest during the dauer stage. This chain is Ski protein homolog, found in Caenorhabditis elegans.